Here is a 286-residue protein sequence, read N- to C-terminus: ATP synthase gamma chain (286 aa).

Belongs to the ATPase gamma chain family. In terms of assembly, F-type ATPases have 2 components, CF(1) - the catalytic core - and CF(0) - the membrane proton channel. CF(1) has five subunits: alpha(3), beta(3), gamma(1), delta(1), epsilon(1). CF(0) has three main subunits: a, b and c.

The protein resides in the cell inner membrane. In terms of biological role, produces ATP from ADP in the presence of a proton gradient across the membrane. The gamma chain is believed to be important in regulating ATPase activity and the flow of protons through the CF(0) complex. This Alcanivorax borkumensis (strain ATCC 700651 / DSM 11573 / NCIMB 13689 / SK2) protein is ATP synthase gamma chain.